The chain runs to 126 residues: Protein ApaG (126 aa).

One can recognise an ApaG domain in the interval 2-126 (DISTPCIKCQ…FRLAIPNILN (125 aa)).

This Vibrio atlanticus (strain LGP32) (Vibrio splendidus (strain Mel32)) protein is Protein ApaG.